Reading from the N-terminus, the 324-residue chain is Phospho-N-acetylmuramoyl-pentapeptide-transferase (324 aa).

Helical transmembrane passes span 5–25 (GLLV…PLFI), 52–72 (PTMG…IMAI), 77–97 (LGAE…IGFL), 122–142 (VIAI…YIMI), 149–169 (FELG…GSNA), 176–196 (LDGL…IIAV), 201–221 (FGVA…LVFN), 227–247 (VFMG…VAIL), 253–273 (LLVI…IQVI), and 302–322 (VVVT…YIGV).

This sequence belongs to the glycosyltransferase 4 family. MraY subfamily. The cofactor is Mg(2+).

The protein resides in the cell membrane. The enzyme catalyses UDP-N-acetyl-alpha-D-muramoyl-L-alanyl-gamma-D-glutamyl-meso-2,6-diaminopimeloyl-D-alanyl-D-alanine + di-trans,octa-cis-undecaprenyl phosphate = di-trans,octa-cis-undecaprenyl diphospho-N-acetyl-alpha-D-muramoyl-L-alanyl-D-glutamyl-meso-2,6-diaminopimeloyl-D-alanyl-D-alanine + UMP. It participates in cell wall biogenesis; peptidoglycan biosynthesis. Catalyzes the initial step of the lipid cycle reactions in the biosynthesis of the cell wall peptidoglycan: transfers peptidoglycan precursor phospho-MurNAc-pentapeptide from UDP-MurNAc-pentapeptide onto the lipid carrier undecaprenyl phosphate, yielding undecaprenyl-pyrophosphoryl-MurNAc-pentapeptide, known as lipid I. The chain is Phospho-N-acetylmuramoyl-pentapeptide-transferase from Bacillus mycoides (strain KBAB4) (Bacillus weihenstephanensis).